The sequence spans 234 residues: MELKSSSNNNILEQLRNGFARFELVSSPTASVSDSISSTSLPASFISTTKGNSYVFFARINSSMNRSPAAKKVEKYAVDRVKGDGRCLFRALVKGMAFNKGITLNPQRERDDADELRMAVKEVICNDPKEREKYKEALVAITVDESLKRFCQRIGRHDFWGGESELLVLSKLCKQPIIVYIPEHEHGRGGGYGPGFIPIQEYGSEFRGGWGKGKTNKNVVRLLYSGRNHYDLLR.

The OTU domain maps to 76-234 (YAVDRVKGDG…SGRNHYDLLR (159 aa)). Positions 81-87 (VKGDGRC) are cys-loop. Residue D84 is part of the active site. Catalysis depends on C87, which acts as the Nucleophile. Positions 154–164 (IGRHDFWGGES) are variable-loop. Positions 224–229 (YSGRNH) are his-loop. The active site involves H229.

This sequence belongs to the peptidase C85 family.

It carries out the reaction Thiol-dependent hydrolysis of ester, thioester, amide, peptide and isopeptide bonds formed by the C-terminal Gly of ubiquitin (a 76-residue protein attached to proteins as an intracellular targeting signal).. Functionally, hydrolase that can remove conjugated ubiquitin from proteins in vitro and may therefore play an important regulatory role at the level of protein turnover by preventing degradation. Cysteine protease with a preference for 'Lys-63' over 'Lys-48' over 'Met-1' -linked ubiquitin (UB) tetramers (e.g. Ub3 and Ub4) as substrates. Also cleaves RUB-GST fusion. In Arabidopsis thaliana (Mouse-ear cress), this protein is OVARIAN TUMOR DOMAIN-containing deubiquitinating enzyme 3.